Consider the following 387-residue polypeptide: 3-ketoacyl-CoA thiolase (387 aa).

The active-site Acyl-thioester intermediate is the C91. Residues H343 and C373 each act as proton acceptor in the active site.

This sequence belongs to the thiolase-like superfamily. Thiolase family. As to quaternary structure, heterotetramer of two alpha chains (FadB) and two beta chains (FadA).

The protein localises to the cytoplasm. The catalysed reaction is an acyl-CoA + acetyl-CoA = a 3-oxoacyl-CoA + CoA. Its pathway is lipid metabolism; fatty acid beta-oxidation. Functionally, catalyzes the final step of fatty acid oxidation in which acetyl-CoA is released and the CoA ester of a fatty acid two carbons shorter is formed. The sequence is that of 3-ketoacyl-CoA thiolase from Aliivibrio salmonicida (strain LFI1238) (Vibrio salmonicida (strain LFI1238)).